A 347-amino-acid polypeptide reads, in one-letter code: Trace amine-associated receptor 4 (347 aa).

The Extracellular segment spans residues 1–37 (MNSPDLWYSPETQFCFAAANNSCPRKARPALVVCAMY). A glycan (N-linked (GlcNAc...) asparagine) is linked at Asn-20. Intrachain disulfides connect Cys-23-Cys-187 and Cys-106-Cys-191. The chain crosses the membrane as a helical span at residues 38–58 (LVMIGAIVMTMLGNMVVIISI). The Cytoplasmic portion of the chain corresponds to 59–69 (AHFKQLHSPTN). The helical transmembrane segment at 70 to 90 (FLILSMATTDFLLSCVVMPFS) threads the bilayer. Residues 91-110 (MVRSIESCWYFGDLFCKVHS) lie on the Extracellular side of the membrane. A helical transmembrane segment spans residues 111–129 (CCDIMLCTTSIFHLCFISV). Topologically, residues 130-149 (DRHYAVCDPLHYVTQITVGV) are cytoplasmic. A helical transmembrane segment spans residues 150-170 (VGVFLLISWSVPILFAFGLVF). Residues 171-197 (SELNLIGAEDFVAAIDCTGLCVLIFNK) are Extracellular-facing. The extracellular Loop 2 (ECL2) stretch occupies residues 175–188 (LIGAEDFVAAIDCT). Residues 198–218 (LWGVLASFIAFFLPGAIMVGI) form a helical membrane-spanning segment. At 219 to 260 (YIHIFTVARKHARKIGPGPRTKRALSESKMKATSGKESKATK) the chain is on the cytoplasmic side. The helical transmembrane segment at 261–281 (TLSIVMGVFVLCWLPFFVLTI) threads the bilayer. At 282–296 (TDPFIGFTTPEDLYN) the chain is on the extracellular side. The chain crosses the membrane as a helical span at residues 297 to 317 (VFLWLGYFNSTFNPIIYGMFY). Topologically, residues 318–347 (PWFRKALRMIVTGTIFRSDSSTSSLHPAHP) are cytoplasmic.

The protein belongs to the G-protein coupled receptor 1 family.

Its subcellular location is the cell membrane. Olfactory receptor specific for 2-phenylethylamine, a trace amine present at high concentration in the urine of carnivore species, playing a key role in fear and avoidance responses. 2-phenylethylamine acts as a kairomone in the chemical detection of carnivore odor and triggers fear in rats. This receptor is probably mediated by the G(s)-class of G-proteins which activate adenylate cyclase. This chain is Trace amine-associated receptor 4, found in Rattus norvegicus (Rat).